Consider the following 345-residue polypeptide: MTQANTNNAYGKDIAMTVIGAGSYGTSLAISLARNGANVILWGHEPEHMARLEADRANHEFLPGIDFPESLIIESDLEKAVQASRDLLVVVPSHVFGIVLNSCKPFLREDSRICWATKGLEPETGRLLKEVAFDIIGDSYSLAVLSGPTFAKELAMGMPTAISVASPDSAFVADLQEKIHCSKTFRVYANNDFIGMQLGGAVKNVIAIGAGMSDGIGFGANARTALITRGLAEMSRLGAALGAQPETFMGMAGLGDLVLTCTDNQSRNRRFGLALGQGKDVDTAQEEIGQVVEGYRNTKEVWMLSQRMGVEMPIVDQIYQVLYQGKDARLAAQDLLARDKKAEGK.

NADPH is bound by residues Ser23, Tyr24, His44, and Lys118. Sn-glycerol 3-phosphate is bound by residues Lys118, Gly147, and Thr149. Position 151 (Ala151) interacts with NADPH. Residues Lys203, Asp256, Ser266, Arg267, and Asn268 each coordinate sn-glycerol 3-phosphate. The Proton acceptor role is filled by Lys203. Residue Arg267 coordinates NADPH. Residues Val291 and Glu293 each coordinate NADPH.

This sequence belongs to the NAD-dependent glycerol-3-phosphate dehydrogenase family.

The protein localises to the cytoplasm. The catalysed reaction is sn-glycerol 3-phosphate + NAD(+) = dihydroxyacetone phosphate + NADH + H(+). It catalyses the reaction sn-glycerol 3-phosphate + NADP(+) = dihydroxyacetone phosphate + NADPH + H(+). Its pathway is membrane lipid metabolism; glycerophospholipid metabolism. Functionally, catalyzes the reduction of the glycolytic intermediate dihydroxyacetone phosphate (DHAP) to sn-glycerol 3-phosphate (G3P), the key precursor for phospholipid synthesis. This chain is Glycerol-3-phosphate dehydrogenase [NAD(P)+], found in Vibrio campbellii (strain ATCC BAA-1116).